A 229-amino-acid chain; its full sequence is 1-(5-phosphoribosyl)-5-[(5-phosphoribosylamino)methylideneamino] imidazole-4-carboxamide isomerase (229 aa).

Asp8 functions as the Proton acceptor in the catalytic mechanism. Asp125 (proton donor) is an active-site residue.

It belongs to the HisA/HisF family.

It is found in the cytoplasm. It carries out the reaction 1-(5-phospho-beta-D-ribosyl)-5-[(5-phospho-beta-D-ribosylamino)methylideneamino]imidazole-4-carboxamide = 5-[(5-phospho-1-deoxy-D-ribulos-1-ylimino)methylamino]-1-(5-phospho-beta-D-ribosyl)imidazole-4-carboxamide. It functions in the pathway amino-acid biosynthesis; L-histidine biosynthesis; L-histidine from 5-phospho-alpha-D-ribose 1-diphosphate: step 4/9. This chain is 1-(5-phosphoribosyl)-5-[(5-phosphoribosylamino)methylideneamino] imidazole-4-carboxamide isomerase, found in Thermococcus onnurineus (strain NA1).